The sequence spans 208 residues: MELKVLNTGGSETGEVVTLNDAVFSAEVSEHAMYLDVKSIMANRRQGTHKAKNRSEVRGGGRKPYRQKGTGHARQGSTRSPLMTGGGTIFGPEPRDYGLKVNKKVKKLARRSALTNKANEGGIVVVEDFVFDQIKTRQMAEVLKNLGLDSRKTLMLMPEHNDIIVRSGRNIPKLQVVVADNASTYDILDSQTVLVQKTALKKIEETLG.

The disordered stretch occupies residues 44-89 (RRQGTHKAKNRSEVRGGGRKPYRQKGTGHARQGSTRSPLMTGGGTI). Over residues 60–71 (GGRKPYRQKGTG) the composition is skewed to basic residues.

It belongs to the universal ribosomal protein uL4 family. Part of the 50S ribosomal subunit.

Its function is as follows. One of the primary rRNA binding proteins, this protein initially binds near the 5'-end of the 23S rRNA. It is important during the early stages of 50S assembly. It makes multiple contacts with different domains of the 23S rRNA in the assembled 50S subunit and ribosome. Functionally, forms part of the polypeptide exit tunnel. The polypeptide is Large ribosomal subunit protein uL4 (Chlorobium phaeobacteroides (strain BS1)).